The following is a 111-amino-acid chain: Resistin-like alpha (111 aa).

A signal peptide spans 1 to 23; sequence MKTATCSLLICVFLLQLMVPVNT. Disulfide bonds link Cys-55/Cys-108, Cys-67/Cys-107, Cys-76/Cys-93, Cys-78/Cys-95, and Cys-82/Cys-97.

It belongs to the resistin/FIZZ family. Monomer. As to expression, highest levels in adipose tissue.

The protein resides in the secreted. In terms of biological role, probable hormone. Plays a role in pulmonary vascular remodeling. The protein is Resistin-like alpha (Retnla) of Rattus norvegicus (Rat).